A 638-amino-acid polypeptide reads, in one-letter code: Homeobox protein 10 (638 aa).

3 disordered regions span residues 23–55, 76–139, and 195–219; these read ETQP…LNTN, TDEN…VNTN, and IANE…EEAK. 2 stretches are compositionally biased toward low complexity: residues 24–55 and 80–139; these read TQPT…LNTN and NTSV…VNTN. Residues 205–214 are compositionally biased toward polar residues; that stretch reads EPQTNSNVNG. Positions 301-360 form a DNA-binding region, homeobox; that stretch reads NKKKRQRTSPEQLAILEQIFETDKMPSQQIRVRLANQLGMSSRRVQIWFQNKRAKVKRGG. Disordered regions lie at residues 381–431 and 448–638; these read EDED…TSSD and SSSS…IVKN. Low complexity-rich tracts occupy residues 388–411, 419–430, and 462–501; these read SLTI…NNNG, LSSSPTNLNTSS, and NNTN…TTTT. 2 stretches are compositionally biased toward polar residues: residues 502 to 522 and 545 to 573; these read SSSP…NKLT and SLNS…TDKQ. Low complexity predominate over residues 575–625; that stretch reads NSDFSNFNNNNNNNNNNNNNNNNNNNINNNGNNNSNNNDSNNNNNKSNFSD.

It localises to the nucleus. Functionally, putative transcription factor. This chain is Homeobox protein 10 (hbx10), found in Dictyostelium discoideum (Social amoeba).